Here is a 348-residue protein sequence, read N- to C-terminus: uncharacterized protein (348 aa).

The protein localises to the virion. This is an uncharacterized protein from Acanthamoeba polyphaga mimivirus (APMV).